A 207-amino-acid chain; its full sequence is N-(5'-phosphoribosyl)anthranilate isomerase (207 aa).

The protein belongs to the TrpF family.

It catalyses the reaction N-(5-phospho-beta-D-ribosyl)anthranilate = 1-(2-carboxyphenylamino)-1-deoxy-D-ribulose 5-phosphate. It participates in amino-acid biosynthesis; L-tryptophan biosynthesis; L-tryptophan from chorismate: step 3/5. This Staphylococcus epidermidis (strain ATCC 35984 / DSM 28319 / BCRC 17069 / CCUG 31568 / BM 3577 / RP62A) protein is N-(5'-phosphoribosyl)anthranilate isomerase.